Here is a 466-residue protein sequence, read N- to C-terminus: MSVVPVADVLQGRVAVDSEVTVRGWVRTRRDSKAGISFLAVYDGSCFDPVQAVINNSLPNYNEDVLRLTTGCSVIVTGKVVASPGQGQQFEIQASKVEVAGWVEDPDTYPMAAKRHSIEYLREVAHLRPRTNLIGAVARVRHTLAQALHRFFNEQGFFWVSTPLITASDTEGAGEMFRVSTLDLENLPRNDQGKVDFDKDFFGKESFLTVSGQLNGETYACALSKIYTFGPTFRAENSNTSRHLAEFWMLEPEVAFANLNDIAGLAEAMLKYVFKAVLEERADDMKFFAERVDKDAVSRLERFIEADFAQVDYTDAVTILENCGRKFENPVYWGVDLSSEHERYLAEEHFKAPVVVKNYPKDIKAFYMRLNEDGKTVAAMDVLAPGIGEIIGGSQREERLDVLDVRMLEMGLNKEDYWWYRDLRRYGTVPHSGFGLGFERLIAYVTGVQNVRDVIPFPRTPRNASF.

This sequence belongs to the class-II aminoacyl-tRNA synthetase family. In terms of assembly, homodimer.

The protein resides in the cytoplasm. The enzyme catalyses tRNA(Asn) + L-asparagine + ATP = L-asparaginyl-tRNA(Asn) + AMP + diphosphate + H(+). This Shigella dysenteriae serotype 1 (strain Sd197) protein is Asparagine--tRNA ligase.